We begin with the raw amino-acid sequence, 642 residues long: Regulator of MON1-CCZ1 complex (642 aa).

The Mic1 domain maps to 462–616; the sequence is RPYTESILML…KLYETLSFPK (155 aa).

The protein belongs to the RMC1 family. As to quaternary structure, component of the Mon1-Ccz1 guanyl-nucleotide exchange factor complex made up of Mon1, Ccz1 and Bulli; the interaction of Bulli with the Mon1-Ccz1 heterodimer is mediated via the C-terminal Mic1 domain of Bulli. Mon1 and Ccz1 form a stable complex which displays Rab7 GEF activity with or without Bulli; GEF activity is enhanced by Bulli possibly by improving membrane association of the complex.

The protein resides in the late endosome. Its function is as follows. Positive regulator of the Rab7 guanyl-nucleotide exchange activity of the Mon1-Ccz1 complex, possibly by enhancing its endosomal membrane association. As part of the Mon1-Ccz1 complex involved in endolysosomal biogenesis possibly by mediating Rab conversion, the replacement of Rab5 with Rab7 during late endosome maturation. The sequence is that of Regulator of MON1-CCZ1 complex from Drosophila melanogaster (Fruit fly).